Here is a 109-residue protein sequence, read N- to C-terminus: Ribonuclease P protein component (109 aa).

The protein belongs to the RnpA family. Consists of a catalytic RNA component (M1 or rnpB) and a protein subunit.

It catalyses the reaction Endonucleolytic cleavage of RNA, removing 5'-extranucleotides from tRNA precursor.. Functionally, RNaseP catalyzes the removal of the 5'-leader sequence from pre-tRNA to produce the mature 5'-terminus. It can also cleave other RNA substrates such as 4.5S RNA. The protein component plays an auxiliary but essential role in vivo by binding to the 5'-leader sequence and broadening the substrate specificity of the ribozyme. The sequence is that of Ribonuclease P protein component from Mycoplasma mycoides subsp. mycoides SC (strain CCUG 32753 / NCTC 10114 / PG1).